The sequence spans 155 residues: Small ribosomal subunit protein uS7c (155 aa).

It belongs to the universal ribosomal protein uS7 family. In terms of assembly, part of the 30S ribosomal subunit.

It localises to the plastid. Its subcellular location is the chloroplast. One of the primary rRNA binding proteins, it binds directly to 16S rRNA where it nucleates assembly of the head domain of the 30S subunit. This is Small ribosomal subunit protein uS7c (rps7) from Gunnera chilensis (Chilean rhubarb).